The following is a 332-amino-acid chain: Fructose-1,6-bisphosphatase class 1 (332 aa).

Mg(2+) is bound by residues Glu89, Asp110, Leu112, and Asp113. Substrate is bound by residues 113 to 116, Asn206, Tyr239, 257 to 259, and Lys269; these read DGSS and YLY. Glu275 provides a ligand contact to Mg(2+).

Belongs to the FBPase class 1 family. In terms of assembly, homotetramer. Requires Mg(2+) as cofactor.

It is found in the cytoplasm. The enzyme catalyses beta-D-fructose 1,6-bisphosphate + H2O = beta-D-fructose 6-phosphate + phosphate. Its pathway is carbohydrate biosynthesis; gluconeogenesis. This Cronobacter sakazakii (strain ATCC BAA-894) (Enterobacter sakazakii) protein is Fructose-1,6-bisphosphatase class 1.